The sequence spans 558 residues: Pentatricopeptide repeat-containing protein At1g06140, mitochondrial (558 aa).

The N-terminal 79 residues, 1–79, are a transit peptide targeting the mitochondrion; it reads MLPVNRARAL…RNRHSWNTIL (79 aa). PPR repeat units lie at residues 38–68, 71–103, 108–142, 143–173, 174–208, 209–243, 245–275, 276–310, 311–345, 346–376, 377–411, 412–447, and 448–482; these read EVVL…IPCW, NRHS…MRRH, DSFN…GLDK, DDYV…IPVR, NSVL…GLAL, DALT…SFID, SDYL…SVDR, NVVM…SILP, NQCT…GIEM, DAVN…MPER, NVIS…NVVP, NSVT…GVVP, and EEEH…PMAS. Residues 483-558 are type E motif; sequence AWGALLSACR…HVGQSATEVG (76 aa).

This sequence belongs to the PPR family. PCMP-E subfamily.

The protein localises to the mitochondrion. The protein is Pentatricopeptide repeat-containing protein At1g06140, mitochondrial (PCMP-E61) of Arabidopsis thaliana (Mouse-ear cress).